The chain runs to 119 residues: Large ribosomal subunit protein uL22c (119 aa).

It belongs to the universal ribosomal protein uL22 family. As to quaternary structure, part of the 50S ribosomal subunit.

It localises to the plastid. The protein localises to the chloroplast. Functionally, this protein binds specifically to 23S rRNA. The globular domain of the protein is located near the polypeptide exit tunnel on the outside of the subunit, while an extended beta-hairpin is found that lines the wall of the exit tunnel in the center of the 70S ribosome. This is Large ribosomal subunit protein uL22c (rpl22) from Marchantia polymorpha (Common liverwort).